A 74-amino-acid polypeptide reads, in one-letter code: Large ribosomal subunit protein bL31 (74 aa).

The Zn(2+) site is built by C16, C18, C37, and C40.

The protein belongs to the bacterial ribosomal protein bL31 family. Type A subfamily. Part of the 50S ribosomal subunit. Requires Zn(2+) as cofactor.

Its function is as follows. Binds the 23S rRNA. This is Large ribosomal subunit protein bL31 from Koribacter versatilis (strain Ellin345).